Consider the following 442-residue polypeptide: Glutamate--methylamine ligase (442 aa).

Residues 13 to 97 (NQVKYILAQF…IACDGHTHGK (85 aa)) form the GS beta-grasp domain. The GS catalytic domain occupies 103 to 442 (TRVVLKKQLE…WEVNSYLEFF (340 aa)).

The protein belongs to the glutamine synthetase family. Type 3 subfamily. The cofactor is Mg(2+).

The enzyme catalyses methylamine + L-glutamate + ATP = N(5)-methyl-L-glutamine + ADP + phosphate + H(+). In terms of biological role, catalyzes the formation of N(5)-methyl-L-glutamine from glutamate and methylamine. The polypeptide is Glutamate--methylamine ligase (Methyloversatilis universalis (strain ATCC BAA-1314 / DSM 25237 / JCM 13912 / CCUG 52030 / FAM5)).